The primary structure comprises 647 residues: DNA ligase (647 aa).

NAD(+)-binding positions include 30–34 (DEEYD), 79–80 (SM), and glutamate 105. Lysine 107 serves as the catalytic N6-AMP-lysine intermediate. The NAD(+) site is built by arginine 128, glutamate 162, and lysine 301. Cysteine 395, cysteine 398, cysteine 411, and cysteine 416 together coordinate Zn(2+). The BRCT domain occupies 570–647 (KSDGVIFGKT…ESAFNELVKE (78 aa)).

Belongs to the NAD-dependent DNA ligase family. LigA subfamily. Requires Mg(2+) as cofactor. Mn(2+) serves as cofactor.

It carries out the reaction NAD(+) + (deoxyribonucleotide)n-3'-hydroxyl + 5'-phospho-(deoxyribonucleotide)m = (deoxyribonucleotide)n+m + AMP + beta-nicotinamide D-nucleotide.. Its function is as follows. DNA ligase that catalyzes the formation of phosphodiester linkages between 5'-phosphoryl and 3'-hydroxyl groups in double-stranded DNA using NAD as a coenzyme and as the energy source for the reaction. It is essential for DNA replication and repair of damaged DNA. The polypeptide is DNA ligase (Campylobacter jejuni subsp. jejuni serotype O:2 (strain ATCC 700819 / NCTC 11168)).